Here is a 151-residue protein sequence, read N- to C-terminus: Small ribosomal subunit protein uS15 (151 aa).

Residues 1–20 form a disordered region; it reads MARLHSGKRGSSGSTRPLRT.

This sequence belongs to the universal ribosomal protein uS15 family. In terms of assembly, part of the 30S ribosomal subunit.

This chain is Small ribosomal subunit protein uS15, found in Methanococcus maripaludis (strain C7 / ATCC BAA-1331).